Reading from the N-terminus, the 138-residue chain is Large-conductance mechanosensitive channel (138 aa).

Helical transmembrane passes span 19 to 39 (VGVI…GDII), 40 to 60 (MPII…IPLA), and 81 to 101 (GSFL…FMVI).

The protein belongs to the MscL family. As to quaternary structure, homopentamer.

Its subcellular location is the cell inner membrane. Channel that opens in response to stretch forces in the membrane lipid bilayer. May participate in the regulation of osmotic pressure changes within the cell. The sequence is that of Large-conductance mechanosensitive channel from Bradyrhizobium sp. (strain ORS 278).